The sequence spans 227 residues: MLTVIEDLLSKKEVTQFTQALDKGQWLDGKHTAGSQASKVKYNQQLDDGSALAIELRNTVIRKLSGNALFMSSALPNKIYPPKFNRYQGGEHYGLHVDASVMPIPNSHQMLRTDLSATLFLSEPKTYDGGELSIETQFGLQQIKLNAGSVILYPANSLHQVNPVTKGRRTASFFWIESLVRSNDQRSMLFDLDQSIQALTVELGSNDAEVKRLTGVYHNLMRSWATC.

A Fe2OG dioxygenase domain is found at 78–178 (KIYPPKFNRY…RTASFFWIES (101 aa)). Positions 96, 98, and 159 each coordinate Fe cation. R169 contacts 2-oxoglutarate.

Fe(2+) serves as cofactor. The cofactor is L-ascorbate.

This chain is PKHD-type hydroxylase Patl_2273, found in Pseudoalteromonas atlantica (strain T6c / ATCC BAA-1087).